The primary structure comprises 382 residues: Alkanesulfonate monooxygenase (382 aa).

The protein belongs to the SsuD family.

The catalysed reaction is an alkanesulfonate + FMNH2 + O2 = an aldehyde + FMN + sulfite + H2O + 2 H(+). Its function is as follows. Catalyzes the desulfonation of aliphatic sulfonates. The polypeptide is Alkanesulfonate monooxygenase (Pseudomonas entomophila (strain L48)).